We begin with the raw amino-acid sequence, 104 residues long: NADH-quinone oxidoreductase subunit K (104 aa).

Transmembrane regions (helical) follow at residues Val4–Ala24, Val31–Phe51, and Leu67–Leu87.

This sequence belongs to the complex I subunit 4L family. As to quaternary structure, NDH-1 is composed of 14 different subunits. Subunits NuoA, H, J, K, L, M, N constitute the membrane sector of the complex.

Its subcellular location is the cell membrane. The enzyme catalyses a quinone + NADH + 5 H(+)(in) = a quinol + NAD(+) + 4 H(+)(out). Its function is as follows. NDH-1 shuttles electrons from NADH, via FMN and iron-sulfur (Fe-S) centers, to quinones in the respiratory chain. The immediate electron acceptor for the enzyme in this species is believed to be a menaquinone. Couples the redox reaction to proton translocation (for every two electrons transferred, four hydrogen ions are translocated across the cytoplasmic membrane), and thus conserves the redox energy in a proton gradient. The chain is NADH-quinone oxidoreductase subunit K from Bacillus mycoides (strain KBAB4) (Bacillus weihenstephanensis).